We begin with the raw amino-acid sequence, 290 residues long: Diaminopimelate epimerase (290 aa).

Substrate-binding residues include Asn11 and Asn78. The active-site Proton donor is Cys87. Substrate-binding positions include 88–89 (GN), Asn163, Asn199, and 217–218 (ER). Cys226 acts as the Proton acceptor in catalysis. Residue 227–228 (GT) participates in substrate binding.

The protein belongs to the diaminopimelate epimerase family. Homodimer.

The protein resides in the cytoplasm. It carries out the reaction (2S,6S)-2,6-diaminopimelate = meso-2,6-diaminopimelate. It participates in amino-acid biosynthesis; L-lysine biosynthesis via DAP pathway; DL-2,6-diaminopimelate from LL-2,6-diaminopimelate: step 1/1. In terms of biological role, catalyzes the stereoinversion of LL-2,6-diaminopimelate (L,L-DAP) to meso-diaminopimelate (meso-DAP), a precursor of L-lysine and an essential component of the bacterial peptidoglycan. The chain is Diaminopimelate epimerase from Mycobacterium ulcerans (strain Agy99).